The chain runs to 89 residues: Small ribosomal subunit protein uS14A (89 aa).

The protein belongs to the universal ribosomal protein uS14 family. Part of the 30S ribosomal subunit. Contacts proteins S3 and S10.

Functionally, binds 16S rRNA, required for the assembly of 30S particles and may also be responsible for determining the conformation of the 16S rRNA at the A site. This chain is Small ribosomal subunit protein uS14A, found in Bacillus velezensis (strain DSM 23117 / BGSC 10A6 / LMG 26770 / FZB42) (Bacillus amyloliquefaciens subsp. plantarum).